Reading from the N-terminus, the 276-residue chain is Large ribosomal subunit protein uL2 (276 aa).

Disordered regions lie at residues 34–55 (LQPLKNNAGRNNNGRITVRHQG) and 221–276 (RGSV…RRTK). Positions 37–48 (LKNNAGRNNNGR) are enriched in polar residues.

The protein belongs to the universal ribosomal protein uL2 family. Part of the 50S ribosomal subunit. Forms a bridge to the 30S subunit in the 70S ribosome.

One of the primary rRNA binding proteins. Required for association of the 30S and 50S subunits to form the 70S ribosome, for tRNA binding and peptide bond formation. It has been suggested to have peptidyltransferase activity; this is somewhat controversial. Makes several contacts with the 16S rRNA in the 70S ribosome. The chain is Large ribosomal subunit protein uL2 from Enterococcus faecalis (strain ATCC 700802 / V583).